Consider the following 431-residue polypeptide: Histidinol dehydrogenase (431 aa).

Positions 127, 189, and 212 each coordinate NAD(+). 3 residues coordinate substrate: S237, Q259, and H262. Residues Q259 and H262 each contribute to the Zn(2+) site. Residues E326 and H327 each act as proton acceptor in the active site. Substrate-binding residues include H327, D360, E414, and H419. D360 lines the Zn(2+) pocket. H419 is a binding site for Zn(2+).

It belongs to the histidinol dehydrogenase family. Zn(2+) is required as a cofactor.

The catalysed reaction is L-histidinol + 2 NAD(+) + H2O = L-histidine + 2 NADH + 3 H(+). The protein operates within amino-acid biosynthesis; L-histidine biosynthesis; L-histidine from 5-phospho-alpha-D-ribose 1-diphosphate: step 9/9. Catalyzes the sequential NAD-dependent oxidations of L-histidinol to L-histidinaldehyde and then to L-histidine. The polypeptide is Histidinol dehydrogenase (Xylella fastidiosa (strain Temecula1 / ATCC 700964)).